The chain runs to 279 residues: Acetyl-coenzyme A carboxylase carboxyl transferase subunit beta (279 aa).

The region spanning Leu-23–Ser-279 is the CoA carboxyltransferase N-terminal domain. 4 residues coordinate Zn(2+): Cys-27, Cys-30, Cys-46, and Cys-49. Residues Cys-27–Cys-49 form a C4-type zinc finger.

It belongs to the AccD/PCCB family. Acetyl-CoA carboxylase is a heterohexamer composed of biotin carboxyl carrier protein (AccB), biotin carboxylase (AccC) and two subunits each of ACCase subunit alpha (AccA) and ACCase subunit beta (AccD). It depends on Zn(2+) as a cofactor.

It is found in the cytoplasm. It carries out the reaction N(6)-carboxybiotinyl-L-lysyl-[protein] + acetyl-CoA = N(6)-biotinyl-L-lysyl-[protein] + malonyl-CoA. It participates in lipid metabolism; malonyl-CoA biosynthesis; malonyl-CoA from acetyl-CoA: step 1/1. Component of the acetyl coenzyme A carboxylase (ACC) complex. Biotin carboxylase (BC) catalyzes the carboxylation of biotin on its carrier protein (BCCP) and then the CO(2) group is transferred by the transcarboxylase to acetyl-CoA to form malonyl-CoA. This chain is Acetyl-coenzyme A carboxylase carboxyl transferase subunit beta, found in Prosthecochloris aestuarii (strain DSM 271 / SK 413).